We begin with the raw amino-acid sequence, 344 residues long: Phenylalanine--tRNA ligase alpha subunit (344 aa).

Residue E256 coordinates Mg(2+).

It belongs to the class-II aminoacyl-tRNA synthetase family. Phe-tRNA synthetase alpha subunit type 1 subfamily. Tetramer of two alpha and two beta subunits. Requires Mg(2+) as cofactor.

The protein resides in the cytoplasm. The enzyme catalyses tRNA(Phe) + L-phenylalanine + ATP = L-phenylalanyl-tRNA(Phe) + AMP + diphosphate + H(+). The polypeptide is Phenylalanine--tRNA ligase alpha subunit (Geobacillus kaustophilus (strain HTA426)).